Here is a 222-residue protein sequence, read N- to C-terminus: Glutathione S-transferase A1 (222 aa).

N-acetylmethionine is present on methionine 1. Alanine 2 carries the post-translational modification N-acetylalanine; in Glutathione S-transferase A1, N-terminally processed. Residues 3–83 (EKPKLHYFNA…YIASKYNLYG (81 aa)) form the GST N-terminal domain. Lysine 4 carries the post-translational modification N6-succinyllysine. Glutathione-binding positions include tyrosine 9, arginine 45, 54-55 (QV), and 67-68 (QT). One can recognise a GST C-terminal domain in the interval 85–207 (DIKERALIDM…LQPGSPRKPP (123 aa)).

Belongs to the GST superfamily. Alpha family. In terms of assembly, homodimer or heterodimer of GSTA1 and GSTA2. As to expression, liver.

The protein resides in the cytoplasm. It catalyses the reaction RX + glutathione = an S-substituted glutathione + a halide anion + H(+). The catalysed reaction is prostaglandin A2 + glutathione = prostaglandin A2-S-(R)-glutathione. It carries out the reaction prostaglandin J2 + glutathione = prostaglandin J2-S-(R)-glutathione. The enzyme catalyses (13S)-hydroperoxy-(9Z,11E)-octadecadienoate + 2 glutathione = (13S)-hydroxy-(9Z,11E)-octadecadienoate + glutathione disulfide + H2O. It catalyses the reaction androst-5-ene-3,17-dione = androst-4-ene-3,17-dione. Its activity is regulated as follows. The isomerase activity is inhibited by S-methylglutathione (GSMe). Functionally, glutathione S-transferase that catalyzes the nucleophilic attack of the sulfur atom of glutathione on the electrophilic groups of a wide range of exogenous and endogenous compounds. Involved in the formation of glutathione conjugates of both prostaglandin A2 (PGA2) and prostaglandin J2 (PGJ2). It also catalyzes the isomerization of D5-androstene-3,17-dione (AD) into D4-androstene-3,17-dione and may therefore play an important role in hormone biosynthesis. Through its glutathione-dependent peroxidase activity toward the fatty acid hydroperoxide (13S)-hydroperoxy-(9Z,11E)-octadecadienoate/13-HPODE it is also involved in the metabolism of oxidized linoleic acid. The polypeptide is Glutathione S-transferase A1 (GSTA1) (Homo sapiens (Human)).